A 356-amino-acid polypeptide reads, in one-letter code: Alpha-N-acetylneuraminide alpha-2,8-sialyltransferase (356 aa).

The Cytoplasmic segment spans residues 1–29 (MSPCGRARRQTSRGAMAVLAWKFPRTRLP). A helical; Signal-anchor for type II membrane protein membrane pass occupies residues 30-48 (MGASALCVVVLCWLYIFPV). Residues 49–356 (YRLPNEKEIV…CEDTSLQPTS (308 aa)) lie on the Lumenal side of the membrane. Asparagine 71 and asparagine 119 each carry an N-linked (GlcNAc...) asparagine glycan. 2 disulfide bridges follow: cysteine 138-cysteine 287 and cysteine 152-cysteine 347. CMP-N-acetyl-beta-neuraminate is bound by residues asparagine 143 and asparagine 166. N-linked (GlcNAc...) asparagine glycosylation is found at asparagine 214 and asparagine 245. Serine 274, threonine 275, glycine 276, tryptophan 296, and histidine 310 together coordinate CMP-N-acetyl-beta-neuraminate. The active-site Proton donor/acceptor is the histidine 322.

The protein belongs to the glycosyltransferase 29 family. Strongly expressed in melanoma cell lines, adult and fetal brain and to a lesser extent in adult and fetal lung.

The protein resides in the golgi apparatus membrane. It carries out the reaction an N-acetyl-alpha-neuraminyl-(2-&gt;3)-beta-D-galactosyl derivative + CMP-N-acetyl-beta-neuraminate = an N-acetyl-alpha-neuraminyl-(2-&gt;8)-N-acetyl-alpha-neuraminyl-(2-&gt;3)-beta-D-galactosyl derivative + CMP + H(+). The enzyme catalyses a ganglioside GM3 (d18:1(4E)) + CMP-N-acetyl-beta-neuraminate = a ganglioside GD3 (d18:1(4E)) + CMP + H(+). The catalysed reaction is a ganglioside GD3 (d18:1(4E)) + CMP-N-acetyl-beta-neuraminate = a ganglioside GT3 (d18:1(4E)) + CMP + H(+). It catalyses the reaction a ganglioside GD1a (d18:1(4E)) + CMP-N-acetyl-beta-neuraminate = a ganglioside GT1a (d18:1(4E)) + CMP + H(+). It carries out the reaction a ganglioside GT1b (d18:1(4E)) + CMP-N-acetyl-beta-neuraminate = a ganglioside GQ1b (d18:1(4E)) + CMP + H(+). The enzyme catalyses a ganglioside GM1b (d18:1(4E)) + CMP-N-acetyl-beta-neuraminate = a ganglioside GD1c (d18:1(4E)) + CMP + H(+). The catalysed reaction is a ganglioside GD3 + CMP-N-acetyl-beta-neuraminate = a ganglioside GT3 + CMP + H(+). It catalyses the reaction [alpha-N-acetylneuraminyl-(2-&gt;8)](n)-alpha-N-acetylneuraminyl-(2-&gt;8)-alpha-N-acetylneuraminyl-(2-&gt;3)-beta-D-galactosyl-(1-&gt;4)-beta-D-glucosyl-(1&lt;-&gt;1)-ceramide + CMP-N-acetyl-beta-neuraminate = [alpha-N-acetylneuraminyl-(2-&gt;8)](n+1)-alpha-N-acetylneuraminyl-(2-&gt;8)-alpha-N-acetylneuraminyl-(2-&gt;3)-beta-D-galactosyl-(1-&gt;4)-beta-D-glucosyl-(1&lt;-&gt;1)-ceramide + CMP + H(+). The protein operates within protein modification; protein glycosylation. It participates in lipid metabolism; sphingolipid metabolism. Its function is as follows. Catalyzes the addition of sialic acid in alpha 2,8-linkage to the sialic acid moiety of the ganglioside GM3 to form ganglioside GD3; gangliosides are a subfamily of complex glycosphingolipds that contain one or more residues of sialic acid. Can catalyze the addition of a second alpha-2,8-sialic acid to GD3 to form GT3. Can use GM1b, GD1a and GT1b as acceptor substrates to synthesize GD1c, GT1a and GQ1b respectively. Can synthesize unusual tetra- and pentasialylated lactosylceramide derivatives identified as GQ3 (II3Neu5Ac4-Gg2Cer) and GP3 (II3Neu5Ac5-Gg2Cer) in breast cancer cells. This Homo sapiens (Human) protein is Alpha-N-acetylneuraminide alpha-2,8-sialyltransferase.